Reading from the N-terminus, the 83-residue chain is Glutaredoxin 3 (83 aa).

One can recognise a Glutaredoxin domain in the interval 2-83 (ANVEIYTKET…ARGGLDPLLK (82 aa)). Cysteines 12 and 15 form a disulfide.

It belongs to the glutaredoxin family. As to quaternary structure, monomer.

In terms of biological role, the disulfide bond functions as an electron carrier in the glutathione-dependent synthesis of deoxyribonucleotides by the enzyme ribonucleotide reductase. In addition, it is also involved in reducing some disulfides in a coupled system with glutathione reductase. The polypeptide is Glutaredoxin 3 (grxC) (Escherichia coli O157:H7).